Reading from the N-terminus, the 417-residue chain is NADH-quinone oxidoreductase subunit D (417 aa).

It belongs to the complex I 49 kDa subunit family. NDH-1 is composed of 14 different subunits. Subunits NuoB, C, D, E, F, and G constitute the peripheral sector of the complex.

It localises to the cell inner membrane. It catalyses the reaction a quinone + NADH + 5 H(+)(in) = a quinol + NAD(+) + 4 H(+)(out). NDH-1 shuttles electrons from NADH, via FMN and iron-sulfur (Fe-S) centers, to quinones in the respiratory chain. The immediate electron acceptor for the enzyme in this species is believed to be ubiquinone. Couples the redox reaction to proton translocation (for every two electrons transferred, four hydrogen ions are translocated across the cytoplasmic membrane), and thus conserves the redox energy in a proton gradient. The sequence is that of NADH-quinone oxidoreductase subunit D from Cupriavidus metallidurans (strain ATCC 43123 / DSM 2839 / NBRC 102507 / CH34) (Ralstonia metallidurans).